The sequence spans 527 residues: Protein TIC 56, chloroplastic (527 aa).

The transit peptide at 1–48 (MSSMNFNPFQNWFEKPPNPVPSINFVSLADSFFPKSQSPNFASIGLPK) directs the protein to the chloroplast. The disordered stretch occupies residues 43–67 (SIGLPKFSKKSPKPETAGTDEPGPY). Asn-350 bears the Deamidated asparagine mark. Basic and acidic residues predominate over residues 491 to 508 (RREEELREEDLKHYSGRT). Residues 491–527 (RREEELREEDLKHYSGRTDEDEEEEEEEDDDSNSKKD) are disordered. Residues 509–521 (DEDEEEEEEEDDD) are compositionally biased toward acidic residues.

As to quaternary structure, part of the Tic complex. Component of the 1-MD complex, composed of TIC20-I, TIC214, TIC100 and TIC56. Interacts with the translocating preproteins. Hydrolysis of ATP is essential for the formation of this complex. The 1-MD complex interacts with TIC21.

It is found in the plastid. The protein resides in the chloroplast inner membrane. Its function is as follows. Involved in protein precursor import into chloroplasts. May be part of an intermediate translocation complex acting as a protein-conducting channel at the inner envelope. This is Protein TIC 56, chloroplastic from Arabidopsis thaliana (Mouse-ear cress).